The primary structure comprises 833 residues: Multiphosphoryl transfer protein 2 (833 aa).

The HPr domain occupies 2–91 (ALIVEFICEL…QWLRDEFPHC (90 aa)). The active-site Tele-phosphohistidine intermediate; for HPr activity is the histidine 16. Phosphohistidine; by EI is present on histidine 16. A PTS EI region spans residues 143-653 (LGNLPAAKGV…AAKARMAQLD (511 aa)). The active-site Tele-phosphohistidine intermediate; for PTS EI activity is the histidine 301. Histidine 301 is modified (phosphohistidine; by autocatalysis). Residues arginine 408 and arginine 444 each coordinate phosphoenolpyruvate. Mg(2+) contacts are provided by glutamate 543 and aspartate 567. Phosphoenolpyruvate is bound by residues 566-567 (ND) and arginine 577. The Proton donor; for EI activity role is filled by cysteine 614. The PTS EIIA type-2 domain occupies 688 to 830 (PLVTAECITL…DAIASLLQHE (143 aa)). Histidine 750 acts as the Tele-phosphohistidine intermediate; for PTS EIIA activity in catalysis. Position 750 is a phosphohistidine; by HPr (histidine 750).

It belongs to the PEP-utilizing enzyme family. It depends on Mg(2+) as a cofactor.

The protein localises to the cytoplasm. It carries out the reaction L-histidyl-[protein] + phosphoenolpyruvate = N(pros)-phospho-L-histidyl-[protein] + pyruvate. The enzyme catalyses D-fructose(out) + N(pros)-phospho-L-histidyl-[protein] = D-fructose 1-phosphate(in) + L-histidyl-[protein]. Multifunctional protein that includes general (non sugar-specific) and sugar-specific components of the phosphoenolpyruvate-dependent sugar phosphotransferase system (sugar PTS). This major carbohydrate active transport system catalyzes the phosphorylation of incoming sugar substrates concomitantly with their translocation across the cell membrane. The enzyme II FrwABC PTS system is involved in fructose transport. The chain is Multiphosphoryl transfer protein 2 from Escherichia coli (strain K12).